Reading from the N-terminus, the 168-residue chain is Photosystem I assembly protein Ycf3 (168 aa).

TPR repeat units follow at residues 35-68 (AFTY…EIDP), 72-105 (SYIL…NPFL), and 120-153 (GEQA…TPGN).

This sequence belongs to the Ycf3 family.

The protein localises to the plastid. Its subcellular location is the chloroplast thylakoid membrane. In terms of biological role, essential for the assembly of the photosystem I (PSI) complex. May act as a chaperone-like factor to guide the assembly of the PSI subunits. The protein is Photosystem I assembly protein Ycf3 of Drimys granadensis.